The following is a 522-amino-acid chain: Golgin subfamily A member 6-like protein 10 (522 aa).

Pro residues predominate over residues 1-11 (MWPQPRLPPHP). Positions 1–77 (MWPQPRLPPH…DSATGIYGEG (77 aa)) are disordered. Over residues 51-62 (NGSSPDTATSGG) the composition is skewed to polar residues. The stretch at 157–328 (SKVEQLQDET…RLCEQEKLPG (172 aa)) forms a coiled coil. Positions 439–452 (KELEKSGGAEEPRG) are enriched in basic and acidic residues. The disordered stretch occupies residues 439–503 (KELEKSGGAE…TGEAAGGAEE (65 aa)). Low complexity-rich tracts occupy residues 456–471 (AAAARPVPGAPVPQGA) and 489–503 (GEAVGTGEAAGGAEE).

It belongs to the GOLGA6 family.

In Homo sapiens (Human), this protein is Golgin subfamily A member 6-like protein 10.